A 203-amino-acid polypeptide reads, in one-letter code: ATP-dependent Clp protease proteolytic subunit (203 aa).

Serine 100 serves as the catalytic Nucleophile. Histidine 125 is a catalytic residue.

It belongs to the peptidase S14 family. As to quaternary structure, fourteen ClpP subunits assemble into 2 heptameric rings which stack back to back to give a disk-like structure with a central cavity, resembling the structure of eukaryotic proteasomes.

The protein resides in the cytoplasm. It carries out the reaction Hydrolysis of proteins to small peptides in the presence of ATP and magnesium. alpha-casein is the usual test substrate. In the absence of ATP, only oligopeptides shorter than five residues are hydrolyzed (such as succinyl-Leu-Tyr-|-NHMec, and Leu-Tyr-Leu-|-Tyr-Trp, in which cleavage of the -Tyr-|-Leu- and -Tyr-|-Trp bonds also occurs).. Functionally, cleaves peptides in various proteins in a process that requires ATP hydrolysis. Has a chymotrypsin-like activity. Plays a major role in the degradation of misfolded proteins. This Anaeromyxobacter dehalogenans (strain 2CP-1 / ATCC BAA-258) protein is ATP-dependent Clp protease proteolytic subunit.